The primary structure comprises 276 residues: Large ribosomal subunit protein uL2 (276 aa).

The tract at residues glycine 223–lysine 276 is disordered. Positions lysine 265 to lysine 276 are enriched in basic and acidic residues.

It belongs to the universal ribosomal protein uL2 family. As to quaternary structure, part of the 50S ribosomal subunit. Forms a bridge to the 30S subunit in the 70S ribosome.

Functionally, one of the primary rRNA binding proteins. Required for association of the 30S and 50S subunits to form the 70S ribosome, for tRNA binding and peptide bond formation. It has been suggested to have peptidyltransferase activity; this is somewhat controversial. Makes several contacts with the 16S rRNA in the 70S ribosome. The chain is Large ribosomal subunit protein uL2 from Caldicellulosiruptor saccharolyticus (strain ATCC 43494 / DSM 8903 / Tp8T 6331).